The sequence spans 87 residues: U15-lycotoxin-Ls1f (87 aa).

The N-terminal stretch at Met1–Ser20 is a signal peptide. Residues Asp21 to Thr66 enclose the WAP domain. Intrachain disulfides connect Cys24/Cys54, Cys32/Cys58, Cys41/Cys53, Cys42/Cys80, and Cys47/Cys62.

This sequence belongs to the venom protein 11 family. 01 (wap-1) subfamily. Contains 5 disulfide bonds. In terms of tissue distribution, expressed by the venom gland.

Its subcellular location is the secreted. In terms of biological role, has antibacterial activity. The sequence is that of U15-lycotoxin-Ls1f from Lycosa singoriensis (Wolf spider).